The primary structure comprises 261 residues: tRNA pseudouridine synthase A (261 aa).

Aspartate 51 (nucleophile) is an active-site residue. Tyrosine 109 is a substrate binding site.

This sequence belongs to the tRNA pseudouridine synthase TruA family. Homodimer.

It catalyses the reaction uridine(38/39/40) in tRNA = pseudouridine(38/39/40) in tRNA. In terms of biological role, formation of pseudouridine at positions 38, 39 and 40 in the anticodon stem and loop of transfer RNAs. The protein is tRNA pseudouridine synthase A of Photobacterium profundum (strain SS9).